The chain runs to 67 residues: Small ribosomal subunit protein eS17 (67 aa).

This sequence belongs to the eukaryotic ribosomal protein eS17 family.

This is Small ribosomal subunit protein eS17 from Korarchaeum cryptofilum (strain OPF8).